A 727-amino-acid chain; its full sequence is Centrosomal protein kizuna (727 aa).

A disordered region spans residues 1 to 20; sequence MTERSGRGGGTRGASALPSP. Residues 77–124 adopt a coiled-coil conformation; that stretch reads KNARIRNQEYLKQFERIQANITASLEKLQELKIEFETQIKKMQLLSKD. Disordered stretches follow at residues 176-226, 271-456, and 564-727; these read DFTT…NKSD, EGKK…FTNL, and RLAV…PRTP. Residues 198–223 show a composition bias toward polar residues; sequence HQQTAQSSDVTGSRVVQTPGDTQCLN. Basic and acidic residues predominate over residues 286-324; sequence LSPENRTTDLKCDSSRRSEGSEGEILTREHIEVEEERAR. A Phosphoserine modification is found at S328. A compositionally biased stretch (basic and acidic residues) spans 343-359; it reads PQEKPPARKASSDHLPC. Over residues 380-390 the composition is skewed to low complexity; sequence LSSSSDLTVSV. T387 carries the phosphothreonine; by PLK1 modification. Positions 442 to 455 are enriched in polar residues; sequence APSTPDSPNESFTN. The span at 569 to 583 shows a compositional bias: low complexity; the sequence is SSKSSCSLPSTPSDE. The span at 603-613 shows a compositional bias: acidic residues; sequence QEDESREESTE. Polar residues predominate over residues 631–642; it reads LKQSALQGSTHQ. 2 stretches are compositionally biased toward low complexity: residues 659–669 and 677–689; these read GLKTGSGTFKT and SEAS…GSPL. 3 positions are modified to phosphoserine: S711, S714, and S716.

It belongs to the kizuna family. As to quaternary structure, interacts with AKAP9, CEP72, ODF2, PCNT and TUBGCP2. Phosphorylation at Thr-387 by PLK1 is not needed for centrosomal localization or pericentriolar material expansion but is indispensable for spindle-pole stabilization.

Its subcellular location is the cytoplasm. It is found in the cytoskeleton. It localises to the microtubule organizing center. The protein localises to the centrosome. The protein resides in the cilium basal body. Functionally, centrosomal protein required for establishing a robust mitotic centrosome architecture that can endure the forces that converge on the centrosomes during spindle formation. Required for stabilizing the expanded pericentriolar material around the centriole. This chain is Centrosomal protein kizuna (KIZ), found in Bos taurus (Bovine).